Consider the following 420-residue polypeptide: Mitochondrial chaperone BCS1 (420 aa).

Topologically, residues 1–15 are mitochondrial intermembrane; sequence MTLSDFIGALKDNPY. The helical transmembrane segment at 16 to 32 threads the bilayer; that stretch reads FGAGFGLVGVGTALAVA. Residues 33–420 are Mitochondrial matrix-facing; it reads RKGAQVGMIF…AIKNIAEIKD (388 aa). An ATP-binding site is contributed by 230–237; the sequence is GPPGCGKS.

This sequence belongs to the AAA ATPase family. BCS1 subfamily.

The protein localises to the mitochondrion inner membrane. The enzyme catalyses ATP + H2O = ADP + phosphate + H(+). Functionally, chaperone necessary for the incorporation of Rieske iron-sulfur protein uqcrfs1 into the mitochondrial respiratory chain complex III. The protein is Mitochondrial chaperone BCS1 (bcs1l) of Danio rerio (Zebrafish).